A 422-amino-acid polypeptide reads, in one-letter code: Dipeptidase aclJ (422 aa).

A helical membrane pass occupies residues 28 to 45 (LAYSVTLTLVALFFTFAL). Positions 77 and 79 each coordinate Zn(2+). N-linked (GlcNAc...) asparagine glycosylation is present at N96. A disulfide bridge links C128 with C219. Residue E190 coordinates Zn(2+). H217 provides a ligand contact to substrate. N270 carries N-linked (GlcNAc...) asparagine glycosylation. An intrachain disulfide couples C287 to C319. Residues R291 and D351 each contribute to the substrate site.

It belongs to the metallo-dependent hydrolases superfamily. Peptidase M19 family. It depends on Zn(2+) as a cofactor.

Its subcellular location is the membrane. It catalyses the reaction an L-aminoacyl-L-amino acid + H2O = 2 an L-alpha-amino acid. It participates in mycotoxin biosynthesis. Its function is as follows. Dipeptidase; part of the gene cluster that mediates the biosynthesis of aspirochlorine (or antibiotic A30641), an unusual halogenated spiro compound with distinctive antifungal properties due to selective inhibition of protein biosynthesis, and which is also active against bacteria, viruses, and murine tumor cells. The non-ribosomal peptide synthetase (NRPS) aclP is responsible the formation of the diketopiperazine (DKP) core from the condensation of 2 phenylalanine residues. One Phe residue is tailored into chlorotyrosine by hydroxylation and chlorination, whereas the second Phe undergoes an unprecedented C-C bond cleavage to be converted into glycine. After formation of the DKP, sulfur is incorporated into the DKP by conjugation with glutathione by aclG, followed by its stepwise degradation to the thiol by aclI, aclJ and aclK, and the dithiol oxidation by aclT. In addition, oxygenases (aclB, aclC, aclL and aclO) and O-methyltransferases (aclM and aclU) act as tailoring enzymes to produce the intermediate dechloroaspirochlorine. Ultimately, chlorination of dechloroaspirochlorine by the halogenase aclH is the last step in the aspirochlorine pathway. The polypeptide is Dipeptidase aclJ (Aspergillus oryzae (strain ATCC 42149 / RIB 40) (Yellow koji mold)).